The primary structure comprises 939 residues: Progesterone receptor (939 aa).

The span at Met-1–Ala-11 shows a compositional bias: basic and acidic residues. The segment at Met-1–Leu-174 is AF3; mediates transcriptional activation (in isoform B). The tract at residues Met-1–Cys-302 is disordered. The modulating, Ala/Pro-rich stretch occupies residues Met-1 to Ile-572. Residue Lys-7 forms a Glycyl lysine isopeptide (Lys-Gly) (interchain with G-Cter in SUMO) linkage. Residues Ala-15–Glu-26 show a composition bias toward low complexity. Phosphoserine is present on Ser-20. Over residues Pro-27–Arg-36 the composition is skewed to basic and acidic residues. Residues Ala-49–Ser-67 are compositionally biased toward low complexity. Ser-141 is modified (phosphoserine). The mediates transcriptional transrepression (in isoform A) stretch occupies residues Met-175–His-314. The short motif at Lys-193 to Arg-197 is the Nuclear localization signal element. Ser-200 is modified (phosphoserine). 2 stretches are compositionally biased toward low complexity: residues Gly-211–Gly-230 and Pro-257–Val-278. Ser-303 carries the phosphoserine; by MAPK1 modification. Ser-349 bears the Phosphoserine; by MAPK mark. Lys-392 participates in a covalent cross-link: Glycyl lysine isopeptide (Lys-Gly) (interchain with G-Cter in SUMO); alternate. Lys-392 is covalently cross-linked (Glycyl lysine isopeptide (Lys-Gly) (interchain with G-Cter in ubiquitin); alternate). At Ser-404 the chain carries Phosphoserine; by CDK2. The segment at Pro-463–Arg-552 is AF1; mediates transcriptional activation. Lys-537 is covalently cross-linked (Glycyl lysine isopeptide (Lys-Gly) (interchain with G-Cter in SUMO)). 2 consecutive NR C4-type zinc fingers follow at residues Cys-573–Cys-593 and Cys-609–Cys-633. A DNA-binding region (nuclear receptor) is located at residues Cys-573–Phe-645. At Ser-682 the chain carries Phosphoserine. The region spanning Gln-685–Ile-919 is the NR LBD domain. Residues Leu-693–Lys-939 form an AF2; mediates transcriptional activation region.

Belongs to the nuclear hormone receptor family. NR3 subfamily. In terms of assembly, interacts with SMARD1 and UNC45A. Interacts with CUEDC2; the interaction promotes ubiquitination, decreases sumoylation, and represses transcriptional activity. Interacts with PIAS3; the interaction promotes sumoylation of PR in a hormone-dependent manner, inhibits DNA-binding, and alters nuclear export. Interacts with SP1; the interaction requires ligand-induced phosphorylation on Ser-349 by ERK1/2-MAPK. Interacts with PRMT2. Isoform A interacts with NCOR2. Isoform B (but not isoform A) interacts with NCOA2 and NCOA1. Isoform B (but not isoform A) interacts with KLF9. Interacts with GTF2B. Post-translationally, phosphorylated on multiple serine sites. Several of these sites are hormone-dependent. Phosphorylation on Ser-303 occurs preferentially on isoform B, is highly hormone-dependent and modulates ubiquitination and sumoylation on Lys-392. Phosphorylation on Ser-303 and Ser-349 also requires induction by hormone. Basal phosphorylation on Ser-200 and Ser-404 is increased in response to progesterone and can be phosphorylated in vitro by the CDK2-A1 complex. Increased levels of phosphorylation on Ser-404 also in the presence of EGF, heregulin, IGF, PMA and FBS. Phosphorylation at this site by CDK2 is ligand-independent, and increases nuclear translocation and transcriptional activity. Phosphorylation at Ser-303, but not at Ser-200, is impaired during the G(2)/M phase of the cell cycle. Phosphorylation on Ser-349 by ERK1/2 MAPK is required for interaction with SP1. Sumoylation is hormone-dependent and represses transcriptional activity. Sumoylation on all three sites is enhanced by PIAS3. Desumoylated by SENP1. Sumoylation on Lys-392, the main site of sumoylation, is repressed by ubiquitination on the same site, and modulated by phosphorylation at Ser-303. In terms of processing, ubiquitination is hormone-dependent and represses sumoylation on the same site. Promoted by MAPK-mediated phosphorylation on Ser-303. Post-translationally, palmitoylated by ZDHHC7 and ZDHHC21. Palmitoylation is required for plasma membrane targeting and for rapid intracellular signaling via ERK and AKT kinases and cAMP generation. Expressed in mammary gland and uterus.

It is found in the nucleus. The protein resides in the cytoplasm. Functionally, the steroid hormones and their receptors are involved in the regulation of eukaryotic gene expression and affect cellular proliferation and differentiation in target tissues. Depending on the isoform, progesterone receptor functions as a transcriptional activator or repressor. In terms of biological role, ligand-dependent transdominant repressor of steroid hormone receptor transcriptional activity including repression of its isoform B, MR and ER. Transrepressional activity may involve recruitment of corepressor NCOR2. Its function is as follows. Transcriptional activator of several progesteron-dependent promoters in a variety of cell types. Involved in activation of SRC-dependent MAPK signaling on hormone stimulation. The chain is Progesterone receptor (PGR) from Canis lupus familiaris (Dog).